The sequence spans 267 residues: CD82 antigen (267 aa).

Residues 1 to 11 lie on the Cytoplasmic side of the membrane; that stretch reads MGSACIKVTKY. Residue C5 is the site of S-palmitoyl cysteine attachment. The helical transmembrane segment at 12 to 32 threads the bilayer; sequence FLFLFNLIFFILGAVILGFGV. The Extracellular portion of the chain corresponds to 33-53; sequence WILADKSSFISVLQTSSSSLR. The chain crosses the membrane as a helical span at residues 54 to 72; that stretch reads MGAYVFIGVGAVTMLMGFL. Over 73-83 the chain is Cytoplasmic; the sequence is GCIGAVNEVRC. A lipid anchor (S-palmitoyl cysteine) is attached at C74. The helical transmembrane segment at 84–110 threads the bilayer; sequence LLGLYFAFLLLILIAQVTAGALFYFNM. Residues 111–228 are Extracellular-facing; the sequence is GKLKQEMGGI…KVQAWLQENL (118 aa). N-linked (GlcNAc...) asparagine glycosylation is found at N129, N157, and N198. The chain crosses the membrane as a helical span at residues 229-250; it reads GIILGVGVGVAIIELLGMVLSI. Residues 251–267 are Cytoplasmic-facing; sequence CLCRHVHSEDYSKVPKY.

The protein belongs to the tetraspanin (TM4SF) family. In terms of assembly, forms homooligomers. Interacts directly with IGSF8. Interacts with EGFR. Interacts with VEGFA and PDGFB. Interacts with ITGA4. Interacts with ITGA6; this interaction reduces ITGA6 cell surface expression. Interacts with ITGB1. Interacts with TLR4; this interaction inhibits TLR4-mediated signaling pathway. Interacts with TLR9. Interacts with PLAUR. In terms of processing, palmitoylated. Palmitoylation contributes to oligomerization and surface expression. Lymphoid specific.

Its subcellular location is the cell membrane. The protein resides in the cytoplasmic vesicle. It localises to the phagosome. Its function is as follows. Structural component of specialized membrane microdomains known as tetraspanin-enriched microdomains (TERMs), which act as platforms for receptor clustering and signaling. Participates thereby in diverse biological functions such as cell signal transduction, adhesion, migration and protein trafficking. Acts as a attenuator of EGF signaling, facilitating ligand-induced endocytosis of the receptor and its subsequent desensitization. Mechanistically, modulates ligand-induced ubiquitination and trafficking of EGFR via E3 ligase CBL phosphorylation by PKC. Increases cell-matrix adhesion by regulating the membrane organization of integrin alpha4/ITA4. Modulates adhesion and suppresses cell migration through other integrins such as the alpha6/ITGA6 and beta1/ITGB1. Decreases cell-associated plasminogen activation by interfering with the interaction between urokinase-type plasminogen activator/PLAU and its receptor PLAUR. Associates with CD4 or CD8 and delivers costimulatory signals for the TCR/CD3 pathway. Plays a role in TLR9 trafficking to acidified CpG-containing compartments by controlling interaction between TLR9 and VAMP3 and subsequent myddosome assembly. Inhibits LPS-induced inflammatory response by preventing binding of LPS to TLR4 on the cell surface. Plays a role in the activation of macrophages into anti-inflammatory phenotypes. Independently of Toll-like receptor (TLR) signaling, is recruited to pathogen-containing phagosomes prior to fusion with lysosomes and thereby participates in antigen presentation. Also acts to control angiogenesis and switch angiogenic milieu to quiescent state by binding and sequestering VEGFA and PDGFB to inhibit the signaling they trigger via their respective cell surface receptor. The chain is CD82 antigen (CD82) from Homo sapiens (Human).